The chain runs to 1407 residues: DNA-directed RNA polymerase subunit beta' (1407 aa).

The Zn(2+) site is built by Cys-70, Cys-72, Cys-85, and Cys-88. Positions 460, 462, and 464 each coordinate Mg(2+). Residues Cys-814, Cys-888, Cys-895, and Cys-898 each coordinate Zn(2+). N6-acetyllysine is present on Lys-972.

The protein belongs to the RNA polymerase beta' chain family. The RNAP catalytic core consists of 2 alpha, 1 beta, 1 beta' and 1 omega subunit. When a sigma factor is associated with the core the holoenzyme is formed, which can initiate transcription. The cofactor is Mg(2+). Requires Zn(2+) as cofactor.

The catalysed reaction is RNA(n) + a ribonucleoside 5'-triphosphate = RNA(n+1) + diphosphate. DNA-dependent RNA polymerase catalyzes the transcription of DNA into RNA using the four ribonucleoside triphosphates as substrates. This is DNA-directed RNA polymerase subunit beta' from Shigella dysenteriae serotype 1 (strain Sd197).